Here is a 1582-residue protein sequence, read N- to C-terminus: Adhesion G protein-coupled receptor B1 (1582 aa).

An N-terminal signal peptide occupies residues 1-33; that stretch reads MRGQAAAPGPIWILAPLLLLLLLLGRWARAASG. The Extracellular portion of the chain corresponds to 34–948; it reads ADIGPGTEQC…ATMDKVTVPS (915 aa). A glycan (N-linked (GlcNAc...) asparagine) is linked at N64. In terms of domain architecture, TSP type-1 1 spans 261–315; that stretch reads AGGWKLWSLWGECTRDCGGGLQTRTRTCLPTLGVEGGGCEGVLEEGRLCNRKACG. 3 disulfide bridges follow: C273-C309, C277-C314, and C288-C299. Residues 313–335 form a disordered region; it reads ACGPTGRSSSRSQSLRSTDARRR. A compositionally biased stretch (low complexity) spans 319 to 329; the sequence is RSSSRSQSLRS. TSP type-1 domains are found at residues 354–407, 409–462, 467–520, and 522–575; these read DPAA…AVCP, HGAW…ALCP, DGNW…QQCP, and DGKW…QRCP. Cystine bridges form between C366–C400, C370–C406, C381–C390, C421–C456, C425–C461, C436–C446, C479–C514, C483–C519, C494–C504, C534–C569, C538–C574, C549–C559, C581–C616, and C604–C634. The N-linked (GlcNAc...) asparagine glycan is linked to N401. The N-linked (GlcNAc...) asparagine glycan is linked to N607. A Phosphothreonine modification is found at T609. Residues N692, N844, N877, and N881 are each glycosylated (N-linked (GlcNAc...) asparagine). One can recognise a GAIN-B domain in the interval 760 to 939; the sequence is RDAYQVTDNL…AILAQLSADA (180 aa). Cystine bridges form between C884-C921 and C909-C923. The tract at residues 884–939 is GPS; the sequence is CILWDETDGPSSSAPPQLGPWSWRGCRTVPLDALRTRCLCDRLSTFAILAQLSADA. The N-terminal stalk following vasculostatin-120 cleavage which is not required for signaling activity stretch occupies residues 927–943; it reads STFAILAQLSADATMDK. A helical transmembrane segment spans residues 949-969; sequence VTLIVGCGVSSLTLLMLVIIY. Over 970–980 the chain is Cytoplasmic; that stretch reads VSVWRYIRSER. The chain crosses the membrane as a helical span at residues 981 to 1001; it reads SVILINFCLSIISSNALILIG. The Extracellular portion of the chain corresponds to 1002-1008; the sequence is QTQTRNK. The helical transmembrane segment at 1009–1029 threads the bilayer; it reads VVCTLVAAFLHFFFLSSFCWV. The Cytoplasmic portion of the chain corresponds to 1030 to 1052; the sequence is LTEAWQSYMAVTGRLRSRLVRKR. A helical transmembrane segment spans residues 1053–1073; the sequence is FLCLGWGLPALVVAISVGFTK. Topologically, residues 1074 to 1093 are extracellular; that stretch reads AKGYSTMNYCWLSLEGGLLY. A helical membrane pass occupies residues 1094–1114; it reads AFVGPAAAVVLVNMVIGILVF. Residues 1115-1136 are Cytoplasmic-facing; the sequence is NKLVSKDGITDKKLKERAGASL. Residues 1137-1157 traverse the membrane as a helical segment; sequence WSSCVVLPLLALTWMSAVLAV. The Extracellular portion of the chain corresponds to 1158–1166; the sequence is TDRRSALFQ. The helical transmembrane segment at 1167 to 1187 threads the bilayer; sequence ILFAVFDSLEGFVIVMVHCIL. At 1188–1582 the chain is on the cytoplasmic side; that stretch reads RREVQDAVKC…QDIIDLQTEV (395 aa). Residues 1363–1582 form an involved in interaction with MAGI1 region; it reads YSINIDQMPQ…QDIIDLQTEV (220 aa). Residues 1382 to 1549 form a disordered region; the sequence is PDASFPTRSP…AWVKKELEPL (168 aa). Over residues 1389–1435 the composition is skewed to pro residues; the sequence is RSPPAREPPGGAPPEVPPVQPPPPPPPPPPPPQQPIPPPPTLEPAPP. A compositionally biased stretch (low complexity) spans 1441-1455; it reads GEPAAHPGPSSGAGA. S1467 carries the post-translational modification Phosphoserine. Basic and acidic residues-rich tracts occupy residues 1468 to 1484 and 1491 to 1520; these read LERR…EKIM and QDMF…KPEK. The segment at 1579-1582 is indispensable for interaction with MAGI1; that stretch reads QTEV.

The protein belongs to the G-protein coupled receptor 2 family. LN-TM7 subfamily. In terms of assembly, interacts with ELMO1 and DOCK1. When bound to ELMO1 and DOCK1, acts as a module to promote apoptotic cell engulfment. Interacts with MDM2; the interaction results in inhibition of MDM2-mediated ubiquitination and degradation of DLG4/PSD95. Interacts with PARD3 and TIAM1; the interaction is required for correct dendritic localization of PARD3 and TIAM1 and for dendritic spine formation. Interacts with MAGI1, MAGI3 and BAIAP2. Interacts with PHYHIP. Interacts with DLG4 (via PDZ domain). Vasculostatin-120: Interacts with CD36. Vasculostatin-120: Interacts with ARRB2. Interacts with BAIAP3; this interaction is direct. Proteolytically cleaved to produce vasculostatin-40 and vasculostatin-120. Vasculostatin-40 is the major form and is produced through proteolytic cleavage by MMP14 between residues 321 and 329 with cleavage likely to be between Ser-326 and Leu-327. Post-translationally, ubiquitinated. In brain, widespread expression in all neuropil-rich zones including spinal cord gray matter, cerebellar molecular layer, cerebral cortex, thalamic nuclei and basal ganglia with no expression in white matter (at protein level). In the cerebellar molecular layer, highly expressed in interneuron processes whereas Purkinje cells and their dendrites show weaker expression (at protein level). In the olfactory bulb, highly expressed in glomeruli (at protein level). In the retina, highly concentrated in the outer and inner plexiform layers (at protein level). Expressed in brain. Enriched in hippocampus and cortex. Also detected in other tissues including bone marrow and spleen.

Its subcellular location is the cell membrane. The protein localises to the cell projection. The protein resides in the phagocytic cup. It is found in the cell junction. It localises to the focal adhesion. Its subcellular location is the dendritic spine. The protein localises to the postsynaptic density. The protein resides in the secreted. Its function is as follows. Phosphatidylserine receptor which enhances the engulfment of apoptotic cells. Also mediates the binding and engulfment of Gram-negative bacteria. Stimulates production of reactive oxygen species by macrophages in response to Gram-negative bacteria, resulting in enhanced microbicidal macrophage activity. In the gastric mucosa, required for recognition and engulfment of apoptotic gastric epithelial cells. Promotes myoblast fusion. Activates the Rho pathway in a G-protein-dependent manner. Inhibits MDM2-mediated ubiquitination and degradation of DLG4/PSD95, promoting DLG4 stability and regulating synaptic plasticity. Required for the formation of dendritic spines by ensuring the correct localization of PARD3 and TIAM1. Potent inhibitor of angiogenesis in brain and may play a significant role as a mediator of the p53/TP53 signal in suppression of glioblastoma. Inhibits angiogenesis in a CD36-dependent manner. Functionally, inhibits angiogenesis. The sequence is that of Adhesion G protein-coupled receptor B1 from Mus musculus (Mouse).